Consider the following 111-residue polypeptide: Photosystem II reaction center Psb28 protein (111 aa).

This sequence belongs to the Psb28 family. Part of the photosystem II complex.

The protein localises to the cellular thylakoid membrane. This chain is Photosystem II reaction center Psb28 protein, found in Crocosphaera subtropica (strain ATCC 51142 / BH68) (Cyanothece sp. (strain ATCC 51142)).